The primary structure comprises 524 residues: MGIVINLFLLVPASIVFFAAGFFLGRFFLERLGTTKVLEAEERAVQIVQEAQKEANEYKDLKVTEVNQEWKKKRREFDQEVVIKNNKFNQMQKQVQQREGQLKKQAQDNRDMERRLQDQRKENEQVQESVTLRAAELERIISEQNERLESISGLQSEDARQMLIDNMISKAREEATETIHQIHEEAEQEAERLAEKTLLTAIQRITFEQATENALSVVHIQTDELKGRIIGREGRNIKAFENATGVDIIVDDTPEVVILSCFDPLRRELAKLTLQKLLSEGVIHPVAIEKAYEDASKEIADVIMSAGEDALSSLQLPDMPAEVVKTVGKMKFHTVYGQNLLQHSREVAMLAGVMATELKLDARLAKRAGLLHDIGLVLPATDEPHAISGRNFLKRFNESGVVLNAIAAHHGEVEKESPIAELVDAANVISLSRPGARGAMTADGNVKRLESLEEIAKGFPGVIKTYALQAGREIRVIVEGDNVSDSQADVLAHDIAHKIESEAQYPGQIKVSIVREKRSVAYAK.

A helical transmembrane segment spans residues 3-23; that stretch reads IVINLFLLVPASIVFFAAGFF. Residues 96-127 are disordered; sequence QQREGQLKKQAQDNRDMERRLQDQRKENEQVQ. Residues 100–124 are compositionally biased toward basic and acidic residues; sequence GQLKKQAQDNRDMERRLQDQRKENE. Residues 214 to 280 form the KH domain; the sequence is ALSVVHIQTD…KLTLQKLLSE (67 aa). The HD domain maps to 340–432; that stretch reads LLQHSREVAM…VDAANVISLS (93 aa).

The protein belongs to the RNase Y family.

It localises to the cell membrane. Functionally, endoribonuclease that initiates mRNA decay. This chain is Ribonuclease Y, found in Chlorobium phaeovibrioides (strain DSM 265 / 1930) (Prosthecochloris vibrioformis (strain DSM 265)).